The chain runs to 417 residues: Peptidyl-Asp metalloendopeptidase (417 aa).

The N-terminal stretch at 1–23 (MKSKSMCTTVGLIAMCLAGSAAA) is a signal peptide. His331 provides a ligand contact to Zn(2+). The active site involves Glu332. 2 residues coordinate Zn(2+): His335 and His341.

Belongs to the peptidase M72 family. Zn(2+) is required as a cofactor.

It carries out the reaction Cleavage of Xaa-|-Asp, Xaa-|-Glu and Xaa-|-cysteic acid bonds.. In terms of biological role, metalloprotease, specifically cleaves on the N-terminal side of aspartyl, glutamyl and cysteic acid residues. The sequence is that of Peptidyl-Asp metalloendopeptidase from Xanthomonas campestris pv. campestris (strain ATCC 33913 / DSM 3586 / NCPPB 528 / LMG 568 / P 25).